A 252-amino-acid chain; its full sequence is Ribosomal RNA small subunit methyltransferase J (252 aa).

S-adenosyl-L-methionine-binding positions include 104–105 (RD), 120–121 (ER), 156–157 (SS), and Asp-174.

This sequence belongs to the methyltransferase superfamily. RsmJ family.

Its subcellular location is the cytoplasm. The catalysed reaction is guanosine(1516) in 16S rRNA + S-adenosyl-L-methionine = N(2)-methylguanosine(1516) in 16S rRNA + S-adenosyl-L-homocysteine + H(+). Functionally, specifically methylates the guanosine in position 1516 of 16S rRNA. The protein is Ribosomal RNA small subunit methyltransferase J of Yersinia enterocolitica serotype O:8 / biotype 1B (strain NCTC 13174 / 8081).